Consider the following 621-residue polypeptide: Amino-acid acetyltransferase, mitochondrial (621 aa).

The transit peptide at 1-77 (MIPRAPPSTQ…RSYLASFGVQ (77 aa)) directs the protein to the mitochondrion. Residues 213–233 (PKPGSEEESEPGFSPPETHIY) form a disordered region. Positions 424–600 (LPIRVVRSVS…GSAGLSFIED (177 aa)) constitute an N-acetyltransferase domain.

The protein belongs to the acetyltransferase family.

The protein resides in the mitochondrion. The catalysed reaction is L-glutamate + acetyl-CoA = N-acetyl-L-glutamate + CoA + H(+). It participates in amino-acid biosynthesis; L-arginine biosynthesis; N(2)-acetyl-L-ornithine from L-glutamate: step 1/4. N-acetylglutamate synthase involved in arginine biosynthesis. This Coprinopsis cinerea (strain Okayama-7 / 130 / ATCC MYA-4618 / FGSC 9003) (Inky cap fungus) protein is Amino-acid acetyltransferase, mitochondrial (ARG2).